We begin with the raw amino-acid sequence, 79 residues long: UPF0180 protein BCE_1513 (79 aa).

It belongs to the UPF0180 family.

In Bacillus cereus (strain ATCC 10987 / NRS 248), this protein is UPF0180 protein BCE_1513.